The primary structure comprises 99 residues: Aspartyl/glutamyl-tRNA(Asn/Gln) amidotransferase subunit C (99 aa).

Belongs to the GatC family. Heterotrimer of A, B and C subunits.

The enzyme catalyses L-glutamyl-tRNA(Gln) + L-glutamine + ATP + H2O = L-glutaminyl-tRNA(Gln) + L-glutamate + ADP + phosphate + H(+). It carries out the reaction L-aspartyl-tRNA(Asn) + L-glutamine + ATP + H2O = L-asparaginyl-tRNA(Asn) + L-glutamate + ADP + phosphate + 2 H(+). In terms of biological role, allows the formation of correctly charged Asn-tRNA(Asn) or Gln-tRNA(Gln) through the transamidation of misacylated Asp-tRNA(Asn) or Glu-tRNA(Gln) in organisms which lack either or both of asparaginyl-tRNA or glutaminyl-tRNA synthetases. The reaction takes place in the presence of glutamine and ATP through an activated phospho-Asp-tRNA(Asn) or phospho-Glu-tRNA(Gln). This is Aspartyl/glutamyl-tRNA(Asn/Gln) amidotransferase subunit C from Cupriavidus taiwanensis (strain DSM 17343 / BCRC 17206 / CCUG 44338 / CIP 107171 / LMG 19424 / R1) (Ralstonia taiwanensis (strain LMG 19424)).